We begin with the raw amino-acid sequence, 201 residues long: Methylated-DNA--protein-cysteine methyltransferase (201 aa).

The DNA site is built by Tyr131, Gly132, and Arg146. Catalysis depends on Cys163, which acts as the Nucleophile; methyl group acceptor.

This sequence belongs to the MGMT family.

It localises to the nucleus. The enzyme catalyses a 6-O-methyl-2'-deoxyguanosine in DNA + L-cysteinyl-[protein] = S-methyl-L-cysteinyl-[protein] + a 2'-deoxyguanosine in DNA. It carries out the reaction a 4-O-methyl-thymidine in DNA + L-cysteinyl-[protein] = a thymidine in DNA + S-methyl-L-cysteinyl-[protein]. Functionally, involved in the cellular defense against the biological effects of O6-methylguanine (O6-MeG) and O4-methylthymine (O4-MeT) in DNA. Repairs the methylated nucleobase in DNA by stoichiometrically transferring the methyl group to a cysteine residue in the enzyme. This is a suicide reaction: the enzyme is irreversibly inactivated. This chain is Methylated-DNA--protein-cysteine methyltransferase (MGT1), found in Lodderomyces elongisporus (strain ATCC 11503 / CBS 2605 / JCM 1781 / NBRC 1676 / NRRL YB-4239) (Yeast).